The sequence spans 34 residues: Histone H1, sperm (34 aa).

The disordered stretch occupies residues 1–34; it reads PASPQKRAASPRRSPKKSPRKSPKKSPRKRSASP. Residues 9 to 34 are compositionally biased toward basic residues; it reads ASPRRSPKKSPRKSPKKSPRKRSASP.

This sequence belongs to the histone H1/H5 family. Sperm.

The protein resides in the nucleus. The protein localises to the chromosome. In terms of biological role, histones H1 are necessary for the condensation of nucleosome chains into higher-order structures. The sequence is that of Histone H1, sperm from Strongylocentrotus purpuratus (Purple sea urchin).